Here is a 556-residue protein sequence, read N- to C-terminus: Sphingomyelinase C (556 aa).

The first 27 residues, 1-27 (MRIKKYTKVRLLVNCCLLLFFLIDCGA), serve as a signal peptide directing secretion.

It is found in the secreted. The enzyme catalyses a sphingomyelin + H2O = phosphocholine + an N-acylsphing-4-enine + H(+). The sequence is that of Sphingomyelinase C (sph) from Leptospira interrogans.